The sequence spans 556 residues: Melanoma-associated antigen B4 (556 aa).

Basic residues predominate over residues 1–15; the sequence is MPRGQKSKARAREKR. The disordered stretch occupies residues 1–110; it reads MPRGQKSKAR…RFSENPQNDL (110 aa). Residues 39–73 show a composition bias toward polar residues; the sequence is PSCSNQDSGDAVASTSTAGFPQKSKSQGEAPTTTA. Basic residues predominate over residues 77–87; it reads GACRRSRKSTR. The region spanning 111–310 is the MAGE domain; it reads LTRKTGMLMQ…QAFPTHYEEA (200 aa). Residues 315–335 form a disordered region; that stretch reads EERAQAEAVGSPGTSAKDKAE. Position 325 is a phosphoserine (Ser325). Tandem repeats lie at residues 334–348, 349–363, 364–378, 379–392, 393–407, 408–421, 422–436, 437–451, 452–466, 467–480, 481–495, 496–510, 511–525, 526–539, and 540–554. The 15 X 15 AA approximate tandem repeats stretch occupies residues 334–554; the sequence is AEAKVTLVDS…PLVDSSGKDK (221 aa).

As to expression, expressed in testis (at protein level).

It is found in the cytoplasm. In Mus musculus (Mouse), this protein is Melanoma-associated antigen B4.